The primary structure comprises 556 residues: Membrane protein insertase YidC (556 aa).

5 consecutive transmembrane segments (helical) span residues 6-26, 332-352, 358-378, 428-448, and 501-521; these read IVLYMALALIGLSLWNAWQID, LDLTVDYGILWFLSSLLFSLM, VVGNWGWSIVLVTVLIKLAFY, LGGCLPILIQIPVFIALYWVL, and VMMFLPILFTGLFWNFPSGLV.

It belongs to the OXA1/ALB3/YidC family. Type 1 subfamily. As to quaternary structure, interacts with the Sec translocase complex via SecD. Specifically interacts with transmembrane segments of nascent integral membrane proteins during membrane integration.

It localises to the cell inner membrane. Its function is as follows. Required for the insertion and/or proper folding and/or complex formation of integral membrane proteins into the membrane. Involved in integration of membrane proteins that insert both dependently and independently of the Sec translocase complex, as well as at least some lipoproteins. Aids folding of multispanning membrane proteins. This Legionella pneumophila (strain Paris) protein is Membrane protein insertase YidC.